We begin with the raw amino-acid sequence, 273 residues long: Protein BRANCHLESS TRICHOME (273 aa).

Over residues 1-12 (MKDMKMQSSPET) the composition is skewed to polar residues. Residues 1–30 (MKDMKMQSSPETMMTRIPTPDPHSTGVRED) are disordered. Positions 69–199 (IKVFMESELG…GERERNRMMK (131 aa)) form a coiled coil.

As to quaternary structure, interacts with STI.

Its function is as follows. Acts as a key regulator of trichome branching. Could participate with STI in the same pathway. Also plays a role in integrating endoreplication levels with cell shape. This Arabidopsis thaliana (Mouse-ear cress) protein is Protein BRANCHLESS TRICHOME (BLT).